The chain runs to 153 residues: Putative nuclear shuttle protein (153 aa).

It belongs to the nanoviridae nuclear shuttle protein family.

It is found in the host nucleus. It localises to the host cytoplasm. Putative nuclear shuttle protein. The sequence is that of Putative nuclear shuttle protein (DNA-N) from Trifolium subterraneum (Subterranean clover).